Here is a 770-residue protein sequence, read N- to C-terminus: Transferrin receptor protein 1 (770 aa).

Topologically, residues 1-70 (MMDQARSAFS…KPKRCNGFIC (70 aa)) are cytoplasmic. Residues 1 to 70 (MMDQARSAFS…KPKRCNGFIC (70 aa)) are mediates interaction with SH3BP4. Phosphoserine occurs at positions 10 and 19. The residue at position 20 (Tyr20) is a Phosphotyrosine. Positions 20-23 (YTRF) match the Endocytosis signal motif. Thr21 carries the phosphothreonine modification. Ser24 bears the Phosphoserine mark. A Stop-transfer sequence motif is present at residues 61 to 64 (KPKR). Residues Cys65 and Cys70 are each lipidated (S-palmitoyl cysteine). A helical; Signal-anchor for type II membrane protein membrane pass occupies residues 71-90 (YGTIAVVLFFLIGFMIGYLG). The Extracellular segment spans residues 91-770 (YCKRVEPKAG…GDIWDIDNEF (680 aa)). A disordered region spans residues 102–122 (ERPTGTEALGTERTEPSETEE). O-linked (GalNAc...) threonine glycosylation is present at Thr107. The region spanning 233–323 (SKATTVTGRL…GTGDPYTPGF (91 aa)) is the PA domain. N-linked (GlcNAc...) asparagine glycans are attached at residues Asn261, Asn327, and Asn384. Positions 579–770 (TMDLYENLNQ…GDIWDIDNEF (192 aa)) are ligand-binding. The short motif at 656-658 (RGD) is the Cell attachment site element. 2 N-linked (GlcNAc...) asparagine glycosylation sites follow: Asn732 and Asn737.

This sequence belongs to the peptidase M28 family. M28B subfamily. In terms of assembly, homodimer; disulfide-linked. Binds one transferrin molecule per subunit. Interacts with SH3BP4. Interacts with STEAP3; facilitates TFRC endocytosis in erythroid precursor cells. In terms of processing, stearoylated by ZDHHC6 which inhibits TFRC-mediated activation of the JNK pathway and promotes mitochondrial fragmentation. Stearoylation does not affect iron uptake. Post-translationally, N- and O-glycosylated, phosphorylated and palmitoylated.

It is found in the cell membrane. The protein localises to the melanosome. Cellular uptake of iron occurs via receptor-mediated endocytosis of ligand-occupied transferrin receptor into specialized endosomes. Endosomal acidification leads to iron release. The apotransferrin-receptor complex is then recycled to the cell surface with a return to neutral pH and the concomitant loss of affinity of apotransferrin for its receptor. Transferrin receptor is necessary for development of erythrocytes and the nervous system. Positively regulates T and B cell proliferation through iron uptake. Acts as a lipid sensor that regulates mitochondrial fusion by regulating activation of the JNK pathway. When dietary levels of stearate (C18:0) are low, promotes activation of the JNK pathway, resulting in HUWE1-mediated ubiquitination and subsequent degradation of the mitofusin MFN2 and inhibition of mitochondrial fusion. When dietary levels of stearate (C18:0) are high, TFRC stearoylation inhibits activation of the JNK pathway and thus degradation of the mitofusin MFN2. Mediates uptake of NICOL1 into fibroblasts where it may regulate extracellular matrix production. The sequence is that of Transferrin receptor protein 1 (TFRC) from Canis lupus familiaris (Dog).